A 508-amino-acid chain; its full sequence is UBX domain-containing protein 4 (508 aa).

An interaction with UBQLN1 region spans residues 1–200; it reads MLWFQGAIPA…PAEDLNIRVE (200 aa). Topologically, residues 1-413 are cytoplasmic; that stretch reads MLWFQGAIPA…VHSSSGDIWT (413 aa). 2 stretches are compositionally biased toward polar residues: residues 117 to 151 and 160 to 187; these read SETSVANGSQSESSVSTPSASFEPNNTCENSQSRN and TSDTKSDTATGGESAGHATSSQEPSGCS. A disordered region spans residues 117–196; that stretch reads SETSVANGSQ…SDQRPAEDLN (80 aa). The 79-residue stretch at 315 to 393 folds into the UBX domain; the sequence is ERSTVARIQF…ELAPSASVVV (79 aa). An intramembrane segment occupies 414 to 434; it reads LLGTVLYPFLAIWRLISNFLF. The Cytoplasmic segment spans residues 435 to 508; sequence SNPPPTQTSV…TWNGNSTQQM (74 aa). The tract at residues 440–508 is disordered; the sequence is TQTSVRVTSS…TWNGNSTQQM (69 aa). Polar residues predominate over residues 441–458; that stretch reads QTSVRVTSSEPPNPASSS. Positions 459-491 are enriched in basic and acidic residues; it reads KSEKREPVRKRVLEKRGDDFKKEGKIYRLRTQD. The residue at position 489 (threonine 489) is a Phosphothreonine. Positions 498–508 are enriched in polar residues; it reads NTWNGNSTQQM.

In terms of assembly, directly interacts with VCP. Interacts with UBQLN1. Forms a complex with VCP and UBQLN1.

The protein localises to the endoplasmic reticulum membrane. The protein resides in the nucleus envelope. Involved in endoplasmic reticulum-associated protein degradation (ERAD). Acts as a platform to recruit both UBQLN1 and VCP to the ER during ERAD. This Pongo abelii (Sumatran orangutan) protein is UBX domain-containing protein 4 (UBXN4).